The chain runs to 186 residues: Elongation factor P (186 aa).

The protein belongs to the elongation factor P family.

Its subcellular location is the cytoplasm. It participates in protein biosynthesis; polypeptide chain elongation. Its function is as follows. Involved in peptide bond synthesis. Stimulates efficient translation and peptide-bond synthesis on native or reconstituted 70S ribosomes in vitro. Probably functions indirectly by altering the affinity of the ribosome for aminoacyl-tRNA, thus increasing their reactivity as acceptors for peptidyl transferase. This Enterococcus faecalis (strain ATCC 700802 / V583) protein is Elongation factor P.